The chain runs to 190 residues: Protein GrpE (190 aa).

2 disordered regions span residues 1–22 (MAEETNQSLEDQNVQVEEGQTI) and 170–190 (EEGESKQSIRPARVKVGKPQS). Positions 181–190 (ARVKVGKPQS) are enriched in basic residues.

It belongs to the GrpE family. As to quaternary structure, homodimer.

The protein resides in the cytoplasm. In terms of biological role, participates actively in the response to hyperosmotic and heat shock by preventing the aggregation of stress-denatured proteins, in association with DnaK and GrpE. It is the nucleotide exchange factor for DnaK and may function as a thermosensor. Unfolded proteins bind initially to DnaJ; upon interaction with the DnaJ-bound protein, DnaK hydrolyzes its bound ATP, resulting in the formation of a stable complex. GrpE releases ADP from DnaK; ATP binding to DnaK triggers the release of the substrate protein, thus completing the reaction cycle. Several rounds of ATP-dependent interactions between DnaJ, DnaK and GrpE are required for fully efficient folding. This chain is Protein GrpE, found in Leptospira biflexa serovar Patoc (strain Patoc 1 / Ames).